A 413-amino-acid polypeptide reads, in one-letter code: Multifunctional CCA protein (413 aa).

ATP contacts are provided by Gly-8 and Arg-11. Gly-8 and Arg-11 together coordinate CTP. Residues Asp-21 and Asp-23 each coordinate Mg(2+). Positions 91, 137, and 140 each coordinate ATP. CTP is bound by residues Arg-91, Arg-137, and Arg-140. Positions 225 to 326 (TGVHVMMVID…ANLLQGVDAY (102 aa)) constitute an HD domain.

It belongs to the tRNA nucleotidyltransferase/poly(A) polymerase family. Bacterial CCA-adding enzyme type 1 subfamily. As to quaternary structure, monomer. Can also form homodimers and oligomers. Mg(2+) serves as cofactor. Ni(2+) is required as a cofactor.

The enzyme catalyses a tRNA precursor + 2 CTP + ATP = a tRNA with a 3' CCA end + 3 diphosphate. It catalyses the reaction a tRNA with a 3' CCA end + 2 CTP + ATP = a tRNA with a 3' CCACCA end + 3 diphosphate. Its function is as follows. Catalyzes the addition and repair of the essential 3'-terminal CCA sequence in tRNAs without using a nucleic acid template. Adds these three nucleotides in the order of C, C, and A to the tRNA nucleotide-73, using CTP and ATP as substrates and producing inorganic pyrophosphate. tRNA 3'-terminal CCA addition is required both for tRNA processing and repair. Also involved in tRNA surveillance by mediating tandem CCA addition to generate a CCACCA at the 3' terminus of unstable tRNAs. While stable tRNAs receive only 3'-terminal CCA, unstable tRNAs are marked with CCACCA and rapidly degraded. The sequence is that of Multifunctional CCA protein from Nitrosospira multiformis (strain ATCC 25196 / NCIMB 11849 / C 71).